The sequence spans 467 residues: Translation initiation factor eIF2B subunit delta (467 aa).

Residues M1–D106 are disordered. S16, S19, S21, and S23 each carry phosphoserine. Residues S16–S37 are compositionally biased toward polar residues. The residue at position 27 (T27) is a Phosphothreonine. Phosphoserine occurs at positions 28 and 37. Residues L51 to R61 are compositionally biased toward basic residues. Over residues P84–S102 the composition is skewed to low complexity.

It belongs to the eIF-2B alpha/beta/delta subunits family. In terms of assembly, component of the translation initiation factor 2B (eIF2B) complex which is a heterodecamer of two sets of five different subunits: alpha, beta, gamma, delta and epsilon. Subunits alpha, beta and delta comprise a regulatory subcomplex and subunits epsilon and gamma comprise a catalytic subcomplex. Within the complex, the hexameric regulatory complex resides at the center, with the two heterodimeric catalytic subcomplexes bound on opposite sides.

The protein resides in the cytoplasm. Its subcellular location is the cytosol. In terms of biological role, acts as a component of the translation initiation factor 2B (eIF2B) complex, which catalyzes the exchange of GDP for GTP on the eukaryotic initiation factor 2 (eIF2) complex gamma subunit. Its guanine nucleotide exchange factor activity is repressed when bound to eIF2 complex phosphorylated on the alpha subunit, thereby limiting the amount of methionyl-initiator methionine tRNA available to the ribosome and consequently global translation is repressed. The protein is Translation initiation factor eIF2B subunit delta (tif224) of Schizosaccharomyces pombe (strain 972 / ATCC 24843) (Fission yeast).